A 209-amino-acid chain; its full sequence is Mitochondrial import inner membrane translocase subunit Tim23 (209 aa).

3 helical membrane-spanning segments follow: residues 73-93 (FELA…FGAM), 125-145 (ALWA…GVII), and 172-194 (GGLR…YALY).

It belongs to the Tim17/Tim22/Tim23 family. As to quaternary structure, component of the TIM23 complex at least composed of TIMM23, TIMM17 (TIMM17A or TIMM17B) and TIMM50; within this complex, directly interacts with TIMM50. The complex interacts with the TIMM44 component of the PAM complex and with DNAJC15. Upon mitochondrial depolarization, interacts with PINK1; the interaction is required for PINK1 accumulation at the outer mitochondrial membrane, kinase activation by autophosphorylation and PRKN recruitement to mitochondria.

It is found in the mitochondrion inner membrane. Essential component of the TIM23 complex, a complex that mediates the translocation of transit peptide-containing proteins across the mitochondrial inner membrane. Has a role in the activation of stress-induced mitophagy by protecting PINK1 from OMA1-mediated degradation and facilitating its accumulation at the outer mitochondrial membrane in response to depolarization. The polypeptide is Mitochondrial import inner membrane translocase subunit Tim23 (TIMM23) (Pongo abelii (Sumatran orangutan)).